Consider the following 221-residue polypeptide: Max dimerization protein 1 (221 aa).

Positions 21–49 (RREREAEHGYASMLPYNSKERDGLKRKSK) match the Nuclear localization signal motif. Disordered stretches follow at residues 28–67 (HGYA…EKNR) and 176–202 (DWSS…DEGY). The bHLH domain occupies 55-107 (NSRSTHNEMEKNRRAHLRLCLEKLKILVPLGPESNRHTTLSLLTRAKSHIKKL). Residues 192–202 (SMQSICSDEGY) are compositionally biased toward polar residues.

Efficient DNA binding requires dimerization with another bHLH protein. Binds DNA as a heterodimer with MAX.

The protein localises to the nucleus. Transcriptional repressor. MAD binds with MAX to form a sequence-specific DNA-binding protein complex which recognizes the core sequence 5'-CAC[GA]TG-3'. MAD thus antagonizes MYC transcriptional activity by competing for MAX. This chain is Max dimerization protein 1 (mxd1), found in Xenopus tropicalis (Western clawed frog).